We begin with the raw amino-acid sequence, 156 residues long: Ribosomal RNA large subunit methyltransferase H (156 aa).

S-adenosyl-L-methionine contacts are provided by residues Leu-73, Gly-104, and Leu-123–Leu-128.

This sequence belongs to the RNA methyltransferase RlmH family. In terms of assembly, homodimer.

Its subcellular location is the cytoplasm. The catalysed reaction is pseudouridine(1915) in 23S rRNA + S-adenosyl-L-methionine = N(3)-methylpseudouridine(1915) in 23S rRNA + S-adenosyl-L-homocysteine + H(+). In terms of biological role, specifically methylates the pseudouridine at position 1915 (m3Psi1915) in 23S rRNA. The chain is Ribosomal RNA large subunit methyltransferase H from Hydrogenovibrio crunogenus (strain DSM 25203 / XCL-2) (Thiomicrospira crunogena).